Consider the following 233-residue polypeptide: 7-cyano-7-deazaguanine synthase (233 aa).

Residue Cys7 to Ala17 participates in ATP binding. Residues Cys185, Cys193, Cys196, and Cys199 each contribute to the Zn(2+) site.

The protein belongs to the QueC family. Requires Zn(2+) as cofactor.

The catalysed reaction is 7-carboxy-7-deazaguanine + NH4(+) + ATP = 7-cyano-7-deazaguanine + ADP + phosphate + H2O + H(+). It participates in purine metabolism; 7-cyano-7-deazaguanine biosynthesis. In terms of biological role, catalyzes the ATP-dependent conversion of 7-carboxy-7-deazaguanine (CDG) to 7-cyano-7-deazaguanine (preQ(0)). This chain is 7-cyano-7-deazaguanine synthase, found in Ruegeria sp. (strain TM1040) (Silicibacter sp.).